The chain runs to 28 residues: VTXEEGXYSISDQSKVGEQXIRSPDREM.

The tract at residues 1–28 (VTXEEGXYSISDQSKVGEQXIRSPDREM) is disordered.

This is Seed allergenic protein 1 from Prunus dulcis (Almond).